The sequence spans 1722 residues: Signal-induced proliferation-associated 1-like protein 2 (1722 aa).

2 disordered regions span residues 1–29 (MSDP…RAMQ) and 45–73 (MGPA…PAVP). Residues 57-66 (EGGGGGGGPA) show a composition bias toward gly residues. Serine 149, serine 380, and serine 384 each carry phosphoserine. Residues 362 to 404 (ASAASQTPVPVGPAGGCESPLGSKEDLNAKENPDADEGDGKSN) form a disordered region. Positions 384 to 403 (SKEDLNAKENPDADEGDGKS) are enriched in basic and acidic residues. Residues 596–813 (LLKLDEQGLS…RTRHEYLKDL (218 aa)) form the Rap-GAP domain. A PDZ domain is found at 951 to 1027 (EMTLRRNGLG…VKVVIIQPHE (77 aa)). Serine 1030 is subject to Phosphoserine. Disordered stretches follow at residues 1068 to 1172 (HRVP…DHED), 1197 to 1246 (ERAL…FGSG), and 1328 to 1361 (AADG…KSTG). Composition is skewed to low complexity over residues 1091–1103 (LQCQ…AQAA) and 1120–1131 (SSPSNQSSSSDP). Residues 1197 to 1218 (ERALQKDGSCKDSPNKLSHIGD) are compositionally biased toward basic and acidic residues. Low complexity predominate over residues 1220-1237 (SCSSHSSSNTLSSNTSSN). At serine 1245 the chain carries Phosphoserine. Positions 1328 to 1355 (AADGSMGDLSEVSSHSSGSHRSGSPSTH) are enriched in low complexity. Phosphoserine occurs at positions 1461, 1472, 1478, 1488, 1549, 1552, and 1591. A coiled-coil region spans residues 1652 to 1712 (STLTGKVNQL…ATAQLRTFTE (61 aa)).

The protein is Signal-induced proliferation-associated 1-like protein 2 (Sipa1l2) of Rattus norvegicus (Rat).